A 186-amino-acid chain; its full sequence is Large ribosomal subunit protein uL5 (186 aa).

The protein belongs to the universal ribosomal protein uL5 family. As to quaternary structure, part of the 50S ribosomal subunit; part of the 5S rRNA/L5/L18/L25 subcomplex. Contacts the 5S rRNA and the P site tRNA. Forms a bridge to the 30S subunit in the 70S ribosome.

Functionally, this is one of the proteins that bind and probably mediate the attachment of the 5S RNA into the large ribosomal subunit, where it forms part of the central protuberance. In the 70S ribosome it contacts protein S13 of the 30S subunit (bridge B1b), connecting the 2 subunits; this bridge is implicated in subunit movement. Contacts the P site tRNA; the 5S rRNA and some of its associated proteins might help stabilize positioning of ribosome-bound tRNAs. This is Large ribosomal subunit protein uL5 from Porphyromonas gingivalis (strain ATCC 33277 / DSM 20709 / CIP 103683 / JCM 12257 / NCTC 11834 / 2561).